Consider the following 669-residue polypeptide: PDF receptor (669 aa).

Topologically, residues 1 to 244 (MTLLSNILDC…DIARRTRTLE (244 aa)) are extracellular. A disordered region spans residues 24 to 52 (RQSGSSGPSPSAPTAGTFESKSMLEPTSS). Residues 26–40 (SGSSGPSPSAPTAGT) are compositionally biased toward low complexity. N111, N117, N130, N137, N148, and N198 each carry an N-linked (GlcNAc...) asparagine glycan. Residues 245 to 265 (IVGLCLSLFALIVSLLIFCTF) traverse the membrane as a helical segment. Residues 266–274 (RSLRNNRTK) lie on the Cytoplasmic side of the membrane. The chain crosses the membrane as a helical span at residues 275–295 (IHKNLFVAMVLQVIIRLTLYL). The Extracellular portion of the chain corresponds to 296-334 (DQFRRGNKEAATNTSLSVIENTPYLCEASYVLLEYARTA). N308 carries N-linked (GlcNAc...) asparagine glycosylation. The helical transmembrane segment at 335 to 355 (MFMWMFIEGLYLHNMVTVAVF) threads the bilayer. At 356–366 (QGSFPLKFFSR) the chain is on the cytoplasmic side. Residues 367–387 (LGWCVPILMTTVWARCTVMYM) form a helical membrane-spanning segment. Over 388–411 (DTSLGECLWNYNLTPYYWILEGPR) the chain is Extracellular. The chain crosses the membrane as a helical span at residues 412–432 (LAVILLNFCFLVNIIRVLVMK). The Cytoplasmic segment spans residues 433–449 (LRQSQASDIEQTRKAVR). A helical membrane pass occupies residues 450-470 (AAIVLLPLLGITNLLHQLAPL). Over 471-480 (KTATNFAVWS) the chain is Extracellular. A helical transmembrane segment spans residues 481–501 (YGTHFLTSFQGFFIALIYCFL). Over 502–669 (NGEVRAVLLK…ESVVFELSEQ (168 aa)) the chain is Cytoplasmic. Disordered stretches follow at residues 536–573 (AYNTAPDTDAVQPAGDPSATGKRISPPNKRLNGRKPSS) and 590–614 (PRLQNKAREKGKDRVEKTDAEAEPD). Positions 595 to 609 (KAREKGKDRVEKTDA) are enriched in basic and acidic residues.

Belongs to the G-protein coupled receptor 2 family. As to expression, mainly present in clock neurons of the brain. Localizes in all 4 s-LNv neurons, 1 LNd neuron, 7 DN1 neurons, and 1 DN3 neuron. In addition to the clock neurons, it is also present in approximately 13 pairs of neurons along the ventral nerve cord in third instar larvae, which do not overlap with dopaminergic or serotonergic neurons. Not present in DN2 neurons (at protein level).

The protein localises to the cell membrane. Its function is as follows. Receptor for PDF, a neuropeptide controlling circadian behavioral rhythms. Probably regulates circadian behavioral rhythms through coordination of activities of clock neurons. PDF-binding results in the elevation of cAMP synthesis. Plays a role in sleep regulation and regulates the state transition from sleep to wake. This is PDF receptor from Drosophila melanogaster (Fruit fly).